Consider the following 526-residue polypeptide: Peptide chain release factor 3 (526 aa).

The 270-residue stretch at 8 to 277 (NKRRTFAIIS…GLTEWAPKPQ (270 aa)) folds into the tr-type G domain. GTP-binding positions include 17–24 (SHPDAGKT), 85–89 (DTPGH), and 139–142 (NKLD).

The protein belongs to the TRAFAC class translation factor GTPase superfamily. Classic translation factor GTPase family. PrfC subfamily.

It localises to the cytoplasm. Functionally, increases the formation of ribosomal termination complexes and stimulates activities of RF-1 and RF-2. It binds guanine nucleotides and has strong preference for UGA stop codons. It may interact directly with the ribosome. The stimulation of RF-1 and RF-2 is significantly reduced by GTP and GDP, but not by GMP. The polypeptide is Peptide chain release factor 3 (Haemophilus ducreyi (strain 35000HP / ATCC 700724)).